The primary structure comprises 437 residues: Phosphomethylpyrimidine synthase (437 aa).

Residues asparagine 69, methionine 98, tyrosine 127, histidine 163, 185-187 (SRG), 226-229 (DACR), and glutamate 265 contribute to the substrate site. A Zn(2+)-binding site is contributed by histidine 269. Tyrosine 292 provides a ligand contact to substrate. Histidine 333 contacts Zn(2+). Cysteine 409, cysteine 412, and cysteine 416 together coordinate [4Fe-4S] cluster.

This sequence belongs to the ThiC family. The cofactor is [4Fe-4S] cluster.

The enzyme catalyses 5-amino-1-(5-phospho-beta-D-ribosyl)imidazole + S-adenosyl-L-methionine = 4-amino-2-methyl-5-(phosphooxymethyl)pyrimidine + CO + 5'-deoxyadenosine + formate + L-methionine + 3 H(+). Its pathway is cofactor biosynthesis; thiamine diphosphate biosynthesis. Functionally, catalyzes the synthesis of the hydroxymethylpyrimidine phosphate (HMP-P) moiety of thiamine from aminoimidazole ribotide (AIR) in a radical S-adenosyl-L-methionine (SAM)-dependent reaction. This is Phosphomethylpyrimidine synthase from Alkaliphilus metalliredigens (strain QYMF).